We begin with the raw amino-acid sequence, 313 residues long: Acetaldehyde dehydrogenase 3 (313 aa).

11 to 14 contacts NAD(+); that stretch reads SGNI. Cys129 functions as the Acyl-thioester intermediate in the catalytic mechanism. Residues 160 to 168 and Asn288 contribute to the NAD(+) site; that span reads SAGPGTRAN.

The protein belongs to the acetaldehyde dehydrogenase family.

It carries out the reaction acetaldehyde + NAD(+) + CoA = acetyl-CoA + NADH + H(+). This is Acetaldehyde dehydrogenase 3 from Rhizorhabdus wittichii (strain DSM 6014 / CCUG 31198 / JCM 15750 / NBRC 105917 / EY 4224 / RW1) (Sphingomonas wittichii).